Consider the following 294-residue polypeptide: Acetyl-coenzyme A carboxylase carboxyl transferase subunit beta (294 aa).

In terms of domain architecture, CoA carboxyltransferase N-terminal spans 30–294 (IMTKCPECKK…PEVGGEADGE (265 aa)). Positions 34, 37, 53, and 56 each coordinate Zn(2+). A C4-type zinc finger spans residues 34–56 (CPECKKIMYTKELQKNLMVCNYC).

The protein belongs to the AccD/PCCB family. Acetyl-CoA carboxylase is a heterohexamer composed of biotin carboxyl carrier protein (AccB), biotin carboxylase (AccC) and two subunits each of ACCase subunit alpha (AccA) and ACCase subunit beta (AccD). Zn(2+) serves as cofactor.

The protein resides in the cytoplasm. The catalysed reaction is N(6)-carboxybiotinyl-L-lysyl-[protein] + acetyl-CoA = N(6)-biotinyl-L-lysyl-[protein] + malonyl-CoA. It participates in lipid metabolism; malonyl-CoA biosynthesis; malonyl-CoA from acetyl-CoA: step 1/1. Its function is as follows. Component of the acetyl coenzyme A carboxylase (ACC) complex. Biotin carboxylase (BC) catalyzes the carboxylation of biotin on its carrier protein (BCCP) and then the CO(2) group is transferred by the transcarboxylase to acetyl-CoA to form malonyl-CoA. The polypeptide is Acetyl-coenzyme A carboxylase carboxyl transferase subunit beta (Listeria monocytogenes serotype 4b (strain F2365)).